We begin with the raw amino-acid sequence, 180 residues long: Insulin-like growth factor 2 (180 aa).

An N-terminal signal peptide occupies residues 1 to 24 (MGIPVGKSMLVLLISLAFALCCIA). The interval 25–52 (AYRPSETLCGGELVDTLQFVCSDRGFYF) is b. 3 disulfide bridges follow: cysteine 33–cysteine 71, cysteine 45–cysteine 84, and cysteine 70–cysteine 75. The c stretch occupies residues 53–64 (SRPSSRANRRSR). Residues 65 to 85 (GIVEECCFRSCDLALLETYCA) form an a region. Residues 86–91 (TPAKSE) form a d region. Residues 92–180 (RDVSTSQAVL…ASSEMSSNHQ (89 aa)) constitute a propeptide, e peptide. The segment at 160–180 (VLPPKDPAHGGASSEMSSNHQ) is disordered.

Belongs to the insulin family. In terms of assembly, interacts with MYORG; this interaction is required for IGF2 secretion. Interacts with integrins ITGAV:ITGB3 and ITGA6:ITGB4; integrin-binding is required for IGF2 signaling. Interacts with IGFBP2. Proteolytically processed by PCSK4, proIGF2 is cleaved at Arg-128 and Arg-92 to generate big-IGF2 and mature IGF2.

It localises to the secreted. The insulin-like growth factors possess growth-promoting activity. Major fetal growth hormone in mammals. Plays a key role in regulating fetoplacental development. IGF2 is influenced by placental lactogen. Also involved in tissue differentiation. In adults, involved in glucose metabolism in adipose tissue, skeletal muscle and liver. Acts as a ligand for integrin which is required for IGF2 signaling. Positively regulates myogenic transcription factor MYOD1 function by facilitating the recruitment of transcriptional coactivators, thereby controlling muscle terminal differentiation. Inhibits myoblast differentiation and modulates metabolism via increasing the mitochondrial respiration rate. Its function is as follows. Preptin undergoes glucose-mediated co-secretion with insulin, and acts as a physiological amplifier of glucose-mediated insulin secretion. Exhibits osteogenic properties by increasing osteoblast mitogenic activity through phosphoactivation of MAPK1 and MAPK3. The chain is Insulin-like growth factor 2 from Rattus norvegicus (Rat).